Consider the following 152-residue polypeptide: Xanthine-guanine phosphoribosyltransferase (152 aa).

Residues 37–38, R69, and 88–96 each bind 5-phospho-alpha-D-ribose 1-diphosphate; these read RG and DDLVDTGGT. A GMP-binding site is contributed by R69. D89 provides a ligand contact to Mg(2+). Guanine contacts are provided by D92 and I135. Positions 92 and 135 each coordinate xanthine. GMP is bound by residues 92-96 and 134-135; these read DTGGT and WI.

Belongs to the purine/pyrimidine phosphoribosyltransferase family. XGPT subfamily. Homotetramer. It depends on Mg(2+) as a cofactor.

It is found in the cell inner membrane. The enzyme catalyses GMP + diphosphate = guanine + 5-phospho-alpha-D-ribose 1-diphosphate. It carries out the reaction XMP + diphosphate = xanthine + 5-phospho-alpha-D-ribose 1-diphosphate. The catalysed reaction is IMP + diphosphate = hypoxanthine + 5-phospho-alpha-D-ribose 1-diphosphate. It functions in the pathway purine metabolism; GMP biosynthesis via salvage pathway; GMP from guanine: step 1/1. It participates in purine metabolism; XMP biosynthesis via salvage pathway; XMP from xanthine: step 1/1. In terms of biological role, purine salvage pathway enzyme that catalyzes the transfer of the ribosyl-5-phosphate group from 5-phospho-alpha-D-ribose 1-diphosphate (PRPP) to the N9 position of the 6-oxopurines guanine and xanthine to form the corresponding ribonucleotides GMP (guanosine 5'-monophosphate) and XMP (xanthosine 5'-monophosphate), with the release of PPi. To a lesser extent, also acts on hypoxanthine. The polypeptide is Xanthine-guanine phosphoribosyltransferase (Klebsiella pneumoniae (strain 342)).